We begin with the raw amino-acid sequence, 710 residues long: uncharacterized protein (710 aa).

The segment at 1–20 (MKQRQARLIGTPSQTRRQQE) is disordered. Positions 13–42 (SQTRRQQELAEKLEKVKEVLEDEKKRQFNE) form a coiled coil.

It belongs to the IIV-6 268L family.

This is an uncharacterized protein from Invertebrate iridescent virus 6 (IIV-6).